We begin with the raw amino-acid sequence, 204 residues long: Large ribosomal subunit protein eL15 (204 aa).

Residues 172-182 are compositionally biased toward basic residues; it reads RGLRGRGHLHN. The interval 172-204 is disordered; the sequence is RGLRGRGHLHNKAPPSRRANWKRNQTLSLPRYR. Positions 193–204 are enriched in polar residues; it reads KRNQTLSLPRYR.

This sequence belongs to the eukaryotic ribosomal protein eL15 family.

In Petunia hybrida (Petunia), this protein is Large ribosomal subunit protein eL15 (RPL15).